Consider the following 660-residue polypeptide: Dual specificity mitogen-activated protein kinase kinase 1 (660 aa).

Positions Met-1 to Asn-57 are enriched in low complexity. Disordered regions lie at residues Met-1–Gly-60, Lys-105–Leu-169, and Asn-204–Asn-229. A Glycyl lysine isopeptide (Lys-Gly) (interchain with G-Cter in SUMO) cross-link involves residue Lys-105. Residues Leu-123–Tyr-148 are compositionally biased toward polar residues. The span at Asn-149–Leu-169 shows a compositional bias: low complexity. The Protein kinase domain occupies Leu-292–Val-641. ATP is bound by residues Leu-298–Val-306 and Lys-321. Residue Asp-414 is the Proton acceptor of the active site. Disordered regions lie at residues Ser-491 to Gln-510 and Asn-539 to Ile-573. Low complexity-rich tracts occupy residues Gln-496–Gln-510 and Asn-539–Asn-569.

It belongs to the protein kinase superfamily. STE Ser/Thr protein kinase family. MAP kinase kinase subfamily. In terms of assembly, interacts with mip1. Requires Mg(2+) as cofactor. Post-translationally, sumoylated and ubiquitinated in response to chemoattractant stimulation. Sumoylation is linked to kinase activation and results in translocation.

The protein localises to the cytoplasm. The protein resides in the nucleus. It catalyses the reaction L-seryl-[protein] + ATP = O-phospho-L-seryl-[protein] + ADP + H(+). It carries out the reaction L-threonyl-[protein] + ATP = O-phospho-L-threonyl-[protein] + ADP + H(+). The catalysed reaction is L-tyrosyl-[protein] + ATP = O-phospho-L-tyrosyl-[protein] + ADP + H(+). Functionally, required for cAMP-mediated activation of guanylyl cyclase activity and plays an essential role in aggregation, morphogenesis, and chemotaxis. Appears to act upstream of erk1 but not erk2. The sequence is that of Dual specificity mitogen-activated protein kinase kinase 1 from Dictyostelium discoideum (Social amoeba).